Reading from the N-terminus, the 101-residue chain is Small ribosomal subunit protein uS14 (101 aa).

Residues 51-70 are disordered; it reads LPRDSSPSRQRNRCRQTGRP.

The protein belongs to the universal ribosomal protein uS14 family. Part of the 30S ribosomal subunit. Contacts proteins S3 and S10.

Its function is as follows. Binds 16S rRNA, required for the assembly of 30S particles and may also be responsible for determining the conformation of the 16S rRNA at the A site. In Salmonella arizonae (strain ATCC BAA-731 / CDC346-86 / RSK2980), this protein is Small ribosomal subunit protein uS14.